The sequence spans 408 residues: Potassium channel subfamily K member 13 (408 aa).

The Cytoplasmic segment spans residues 1–19; that stretch reads MAGRGFSWGPGHLNEDNAR. Residues 20 to 40 form a helical membrane-spanning segment; that stretch reads FLLLAALIVLYLLGGAAVFSA. Residues N59 and N65 are each glycosylated (N-linked (GlcNAc...) asparagine). The pore-forming intramembrane region spans 95 to 115; that stretch reads WDFTGAFYFVGTVVSTIGFGM. K(+) is bound by residues T110, I111, and G112. The tract at residues 110–115 is selectivity filter 1; sequence TIGFGM. A helical transmembrane segment spans residues 125 to 145; the sequence is IFLIFYGLVGCSSTILFFNLF. The Cytoplasmic segment spans residues 146–193; the sequence is LERLITIIAYIMKSCHQRQLRRRGALPQESLKDAGQCEVDSLAGWKPS. Residues 194-214 form a helical membrane-spanning segment; sequence VYYVMLILCTASILISCCASA. Residues 224 to 244 constitute an intramembrane region (pore-forming); the sequence is YFDSLYFCFVAFSTIGFGDLV. Positions 237, 238, 239, and 240 each coordinate K(+). The interval 237-242 is selectivity filter 2; it reads TIGFGD. The chain crosses the membrane as a helical span at residues 263–283; it reads VFILMGVCCIYSLFNVISILI. Residues 284 to 408 are Cytoplasmic-facing; the sequence is KQSLNWILRK…NRLAETSGDR (125 aa).

The protein belongs to the two pore domain potassium channel (TC 1.A.1.8) family. In terms of assembly, homodimer. Heterodimer with KCNK12. As to expression, expressed in microglia (at protein level).

The protein localises to the cell membrane. The catalysed reaction is K(+)(in) = K(+)(out). Its activity is regulated as follows. The channel conductance is activated by arachidonic acid and inhibited by Ba(2+) ions, volatile anesthetics such as halothane and antiarrhythmic drugs mexiletine and lidocaine. Insensitive to extracellular pH change. Its function is as follows. K(+) channel that conducts outward rectifying tonic currents potentiated by purinergic signals. Homo- and heterodimerizes to form functional channels with distinct regulatory and gating properties. Contributes most of K(+) currents at the plasma membrane of resting microglia. Maintains a depolarized membrane potential required for proper ramified microglia morphology and phagocytosis, selectively mediating microglial pruning of presynaptic compartments at hippocampal excitatory synapses. Upon local release of ATP caused by neuronal injury or infection, it is potentiated by P2RY12 and P2RX7 receptor signaling and contributes to ATP-triggered K(+) efflux underlying microglial NLRP3 inflammasome assembly and IL1B release. The protein is Potassium channel subfamily K member 13 of Homo sapiens (Human).